We begin with the raw amino-acid sequence, 95 residues long: Acylphosphatase (95 aa).

Residues 9 to 95 (RLTAWVHGRV…KGGLTGFVER (87 aa)) enclose the Acylphosphatase-like domain. Catalysis depends on residues Arg-24 and Asn-42.

It belongs to the acylphosphatase family.

The catalysed reaction is an acyl phosphate + H2O = a carboxylate + phosphate + H(+). The polypeptide is Acylphosphatase (acyP) (Saccharopolyspora erythraea (strain ATCC 11635 / DSM 40517 / JCM 4748 / NBRC 13426 / NCIMB 8594 / NRRL 2338)).